The chain runs to 285 residues: Bifunctional protein FolD (285 aa).

Residues 165 to 167 (GAS) and Ser190 contribute to the NADP(+) site.

Belongs to the tetrahydrofolate dehydrogenase/cyclohydrolase family. Homodimer.

The enzyme catalyses (6R)-5,10-methylene-5,6,7,8-tetrahydrofolate + NADP(+) = (6R)-5,10-methenyltetrahydrofolate + NADPH. It catalyses the reaction (6R)-5,10-methenyltetrahydrofolate + H2O = (6R)-10-formyltetrahydrofolate + H(+). The protein operates within one-carbon metabolism; tetrahydrofolate interconversion. Catalyzes the oxidation of 5,10-methylenetetrahydrofolate to 5,10-methenyltetrahydrofolate and then the hydrolysis of 5,10-methenyltetrahydrofolate to 10-formyltetrahydrofolate. The polypeptide is Bifunctional protein FolD (Cupriavidus metallidurans (strain ATCC 43123 / DSM 2839 / NBRC 102507 / CH34) (Ralstonia metallidurans)).